A 209-amino-acid polypeptide reads, in one-letter code: Dof zinc finger protein DOF1.6 (209 aa).

Polar residues predominate over residues 1–17 (MPSEPNQTRPTRVQPST). Residues 1–29 (MPSEPNQTRPTRVQPSTAAYPPPNLAEPL) form a disordered region. Over residues 20–29 (YPPPNLAEPL) the composition is skewed to pro residues. The Dof-type zinc finger occupies 29-83 (LPCPRCNSTTTKFCYYNNYNLAQPRYYCKSCRRYWTQGGTLRDVPVGGGTRRSSS). The Zn(2+) site is built by cysteine 31, cysteine 34, cysteine 56, and cysteine 59. The segment at 70-116 (RDVPVGGGTRRSSSKRHRSFSTTATSSSSSSSVITTTTQEPATTEAS) is disordered. Residues 89–116 (FSTTATSSSSSSSVITTTTQEPATTEAS) show a composition bias toward low complexity.

It is found in the nucleus. Functionally, transcription factor that binds specifically to a 5'-AA[AG]G-3' consensus core sequence. The protein is Dof zinc finger protein DOF1.6 (DOF1.6) of Arabidopsis thaliana (Mouse-ear cress).